We begin with the raw amino-acid sequence, 63 residues long: Large ribosomal subunit protein bL28 (63 aa).

Belongs to the bacterial ribosomal protein bL28 family.

The polypeptide is Large ribosomal subunit protein bL28 (Thermomicrobium roseum (strain ATCC 27502 / DSM 5159 / P-2)).